We begin with the raw amino-acid sequence, 102 residues long: Envelope protein US9 (102 aa).

Over 1-75 (MAGQNTMEGE…KIYHRKKFCY (75 aa)) the chain is Intravirion. The short motif at 14-15 (LL) is the Di-leucine internalization motif element. Residues 41–55 (EKCYYSDSENETADE) form an acidic region. Phosphoserine; by host CK2 occurs at positions 46 and 48. Residues 76–96 (ITLIIVFVFAMTGAAFALGYI) traverse the membrane as a helical; Signal-anchor for type II membrane protein segment. The Virion surface segment spans residues 97–102 (TSQFVG).

This sequence belongs to the alphaherpesvirinae envelope protein US9 family. In terms of processing, phosphorylated on serines within the acidic cluster, possibly by host CK2. Phosphorylation determines whether endocytosed viral US9 traffics to the trans-Golgi network or recycles to the cell membrane.

The protein localises to the virion membrane. The protein resides in the host Golgi apparatus membrane. Its subcellular location is the host Golgi apparatus. It is found in the host trans-Golgi network. It localises to the host cell membrane. Functionally, essential for the anterograde spread of the infection throughout the host nervous system. Together with the gE/gI heterodimer, US9 is involved in the sorting and transport of viral structural components toward axon tips. This Varicella-zoster virus (strain Dumas) (HHV-3) protein is Envelope protein US9.